The following is a 130-amino-acid chain: Small ribosomal subunit protein uS9 (130 aa).

This sequence belongs to the universal ribosomal protein uS9 family.

This Aster yellows witches'-broom phytoplasma (strain AYWB) protein is Small ribosomal subunit protein uS9.